The primary structure comprises 246 residues: 3-deoxy-manno-octulosonate cytidylyltransferase (246 aa).

This sequence belongs to the KdsB family.

Its subcellular location is the cytoplasm. It carries out the reaction 3-deoxy-alpha-D-manno-oct-2-ulosonate + CTP = CMP-3-deoxy-beta-D-manno-octulosonate + diphosphate. It functions in the pathway nucleotide-sugar biosynthesis; CMP-3-deoxy-D-manno-octulosonate biosynthesis; CMP-3-deoxy-D-manno-octulosonate from 3-deoxy-D-manno-octulosonate and CTP: step 1/1. It participates in bacterial outer membrane biogenesis; lipopolysaccharide biosynthesis. Functionally, activates KDO (a required 8-carbon sugar) for incorporation into bacterial lipopolysaccharide in Gram-negative bacteria. The polypeptide is 3-deoxy-manno-octulosonate cytidylyltransferase (Rickettsia massiliae (strain Mtu5)).